A 135-amino-acid polypeptide reads, in one-letter code: ATP synthase epsilon chain (135 aa).

The protein belongs to the ATPase epsilon chain family. In terms of assembly, F-type ATPases have 2 components, CF(1) - the catalytic core - and CF(0) - the membrane proton channel. CF(1) has five subunits: alpha(3), beta(3), gamma(1), delta(1), epsilon(1). CF(0) has three main subunits: a, b and c.

Its subcellular location is the cell inner membrane. In terms of biological role, produces ATP from ADP in the presence of a proton gradient across the membrane. The sequence is that of ATP synthase epsilon chain from Rhodopseudomonas palustris (strain BisB18).